The following is a 437-amino-acid chain: uncharacterized protein (437 aa).

Residues 47–67 (LLIILIGFILLSSISAIQIDA) traverse the membrane as a helical segment.

The protein resides in the membrane. This is an uncharacterized protein from Methanocaldococcus jannaschii (strain ATCC 43067 / DSM 2661 / JAL-1 / JCM 10045 / NBRC 100440) (Methanococcus jannaschii).